A 452-amino-acid chain; its full sequence is Protein CLT3, chloroplastic (452 aa).

A chloroplast-targeting transit peptide spans 1–34 (MATTSRRFTTGLFASITSVKSHSANRPQSISLIR). The next 10 helical transmembrane spans lie at 105–125 (AEIV…RVMY), 137–157 (FFLA…ILYF), 175–195 (PFLI…AAAA), 202–222 (TTVL…IFLG), 230–250 (ILGC…GSGA), 258–278 (GVLW…GTVL), 307–327 (FQAI…GIPF), 353–373 (GAPF…IALL), 389–409 (TVSV…LGVA), and 412–432 (LPKG…LYSW).

This sequence belongs to the CRT-like transporter family.

The protein localises to the plastid. Its subcellular location is the chloroplast membrane. Its function is as follows. Involved in thiol transport from the plastid to the cytosol. Transports probably both glutathione (GSH) and its precursor, gamma-glutamylcysteine (gamma-EC). Exhibits some functional redundancy with CLT1 in maintaining the root GSH pool. The chain is Protein CLT3, chloroplastic from Arabidopsis thaliana (Mouse-ear cress).